The primary structure comprises 473 residues: Chromosomal replication initiator protein DnaA (473 aa).

The segment at 1-87 is domain I, interacts with DnaA modulators; sequence MADGEESISV…LAVTTFAIVV (87 aa). The tract at residues 87-132 is domain II; it reads VNPEIQQESLSTVGEPEPTPAPYLDVATFTVAPPAEITAPPRNGDT. The interval 133 to 349 is domain III, AAA+ region; it reads RLNSKYSFDN…GTLIRVTAFA (217 aa). The ATP site is built by glycine 177, glycine 179, lysine 180, and threonine 181. Positions 350–473 are domain IV, binds dsDNA; that stretch reads SLNRTPVDMP…LTSRIKQNHR (124 aa).

Belongs to the DnaA family. As to quaternary structure, oligomerizes as a right-handed, spiral filament on DNA at oriC.

It is found in the cytoplasm. Functionally, plays an essential role in the initiation and regulation of chromosomal replication. ATP-DnaA binds to the origin of replication (oriC) to initiate formation of the DNA replication initiation complex once per cell cycle. Binds the DnaA box (a 9 base pair repeat at the origin) and separates the double-stranded (ds)DNA. Forms a right-handed helical filament on oriC DNA; dsDNA binds to the exterior of the filament while single-stranded (ss)DNA is stabiized in the filament's interior. The ATP-DnaA-oriC complex binds and stabilizes one strand of the AT-rich DNA unwinding element (DUE), permitting loading of DNA polymerase. After initiation quickly degrades to an ADP-DnaA complex that is not apt for DNA replication. Binds acidic phospholipids. In Leifsonia xyli subsp. xyli (strain CTCB07), this protein is Chromosomal replication initiator protein DnaA.